The primary structure comprises 388 residues: Phosphopentomutase (388 aa).

Positions 11, 283, 288, 324, 325, and 336 each coordinate Mn(2+).

It belongs to the phosphopentomutase family. It depends on Mn(2+) as a cofactor.

Its subcellular location is the cytoplasm. The catalysed reaction is 2-deoxy-alpha-D-ribose 1-phosphate = 2-deoxy-D-ribose 5-phosphate. It catalyses the reaction alpha-D-ribose 1-phosphate = D-ribose 5-phosphate. The protein operates within carbohydrate degradation; 2-deoxy-D-ribose 1-phosphate degradation; D-glyceraldehyde 3-phosphate and acetaldehyde from 2-deoxy-alpha-D-ribose 1-phosphate: step 1/2. Its function is as follows. Isomerase that catalyzes the conversion of deoxy-ribose 1-phosphate (dRib-1-P) and ribose 1-phosphate (Rib-1-P) to deoxy-ribose 5-phosphate (dRib-5-P) and ribose 5-phosphate (Rib-5-P), respectively. In Anaeromyxobacter dehalogenans (strain 2CP-1 / ATCC BAA-258), this protein is Phosphopentomutase.